Consider the following 131-residue polypeptide: Histone H3-like 4 (131 aa).

K10 is subject to N6,N6,N6-trimethyllysine; alternate. K10 is modified (N6,N6-dimethyllysine; alternate). The residue at position 10 (K10) is an N6-acetyllysine; alternate. Position 10 is an N6-methyllysine; alternate (K10). The residue at position 12 (T12) is a Phosphothreonine. N6-acetyllysine is present on K15. S27 bears the Phosphoserine mark. N6,N6,N6-trimethyllysine; alternate is present on K32. Position 32 is an N6,N6-dimethyllysine; alternate (K32). Position 32 is an N6-methyllysine; alternate (K32).

The protein belongs to the histone H3 family. As to quaternary structure, the nucleosome is a histone octamer containing two molecules each of H2A, H2B, H3 and H4 assembled in one H3-H4 heterotetramer and two H2A-H2B heterodimers. The octamer wraps approximately 147 bp of DNA. In terms of tissue distribution, expressed in roots, seedlings, leaves buds and open flowers.

The protein resides in the nucleus. It localises to the chromosome. Its function is as follows. Core component of nucleosome. Nucleosomes wrap and compact DNA into chromatin, limiting DNA accessibility to the cellular machineries which require DNA as a template. Histones thereby play a central role in transcription regulation, DNA repair, DNA replication and chromosomal stability. DNA accessibility is regulated via a complex set of post-translational modifications of histones, also called histone code, and nucleosome remodeling. The sequence is that of Histone H3-like 4 from Arabidopsis thaliana (Mouse-ear cress).